A 461-amino-acid polypeptide reads, in one-letter code: L-seryl-tRNA(Sec) selenium transferase (461 aa).

Lysine 294 carries the N6-(pyridoxal phosphate)lysine modification.

The protein belongs to the SelA family. Pyridoxal 5'-phosphate serves as cofactor.

It is found in the cytoplasm. The catalysed reaction is L-seryl-tRNA(Sec) + selenophosphate + H(+) = L-selenocysteinyl-tRNA(Sec) + phosphate. The protein operates within aminoacyl-tRNA biosynthesis; selenocysteinyl-tRNA(Sec) biosynthesis; selenocysteinyl-tRNA(Sec) from L-seryl-tRNA(Sec) (bacterial route): step 1/1. In terms of biological role, converts seryl-tRNA(Sec) to selenocysteinyl-tRNA(Sec) required for selenoprotein biosynthesis. The polypeptide is L-seryl-tRNA(Sec) selenium transferase (Haemophilus influenzae (strain ATCC 51907 / DSM 11121 / KW20 / Rd)).